The primary structure comprises 579 residues: 6-deoxy-6-sulfo-D-gluconate dehydratase (579 aa).

[4Fe-4S] cluster is bound by residues C59, C127, and C200.

The protein belongs to the IlvD/Edd family. In terms of assembly, homodimer. Requires [4Fe-4S] cluster as cofactor.

The enzyme catalyses 6-deoxy-6-sulfo-D-gluconate = 2-dehydro-3,6-dideoxy-6-sulfo-D-gluconate + H2O. Its function is as follows. Catalyzes the dehydration of 6-deoxy-6-sulfo-D-gluconate to 2-dehydro-3,6-dideoxy-6-sulfo-D-gluconate. Is involved in a degradation pathway of sulfoquinovose (SQ) that allows P.putida SQ1 to use SQ as the sole carbon and energy source for growth. The chain is 6-deoxy-6-sulfo-D-gluconate dehydratase from Pseudomonas putida (Arthrobacter siderocapsulatus).